A 71-amino-acid polypeptide reads, in one-letter code: uncharacterized protein (71 aa).

Residues 12-34 (YLYNYFSSTTSWLVFIILSLDTI) traverse the membrane as a helical segment.

The protein localises to the membrane. This is an uncharacterized protein from Schizosaccharomyces pombe (strain 972 / ATCC 24843) (Fission yeast).